The chain runs to 942 residues: Eukaryotic translation initiation factor 3 subunit A (942 aa).

Residues 320–494 (FKKYSSIILL…NTVTFFKDPF (175 aa)) enclose the PCI domain. Coiled coils occupy residues 499 to 529 (KAAG…GEEI), 588 to 669 (ITQT…KQRE), 705 to 734 (SKLS…AYRK), and 821 to 912 (IEEV…RKAQ). A disordered region spans residues 502–546 (GTVEEEEEEEEEEGEEVEGEEAETGEEIVEEGEEHENEENKEPEP). Residues 504–538 (VEEEEEEEEEEGEEVEGEEAETGEEIVEEGEEHEN) are compositionally biased toward acidic residues. 2 stretches are compositionally biased toward basic and acidic residues: residues 836–870 (RKAE…ERKS) and 889–911 (RSAK…ERKA). Positions 836-942 (RKAEIEAEER…KMKLRRASKK (107 aa)) are disordered.

The protein belongs to the eIF-3 subunit A family. In terms of assembly, component of the eukaryotic translation initiation factor 3 (eIF-3) complex.

It localises to the cytoplasm. In terms of biological role, RNA-binding component of the eukaryotic translation initiation factor 3 (eIF-3) complex, which is involved in protein synthesis of a specialized repertoire of mRNAs and, together with other initiation factors, stimulates binding of mRNA and methionyl-tRNAi to the 40S ribosome. The eIF-3 complex specifically targets and initiates translation of a subset of mRNAs involved in cell proliferation. In Vanderwaltozyma polyspora (strain ATCC 22028 / DSM 70294 / BCRC 21397 / CBS 2163 / NBRC 10782 / NRRL Y-8283 / UCD 57-17) (Kluyveromyces polysporus), this protein is Eukaryotic translation initiation factor 3 subunit A.